The chain runs to 152 residues: Large ribosomal subunit protein bL9 (152 aa).

Belongs to the bacterial ribosomal protein bL9 family.

Its function is as follows. Binds to the 23S rRNA. The protein is Large ribosomal subunit protein bL9 of Acaryochloris marina (strain MBIC 11017).